A 248-amino-acid polypeptide reads, in one-letter code: Small ribosomal subunit protein uS2 (248 aa).

This sequence belongs to the universal ribosomal protein uS2 family.

In Janthinobacterium sp. (strain Marseille) (Minibacterium massiliensis), this protein is Small ribosomal subunit protein uS2.